Consider the following 290-residue polypeptide: 4-hydroxybenzoate octaprenyltransferase (290 aa).

The next 8 helical transmembrane spans lie at 21–41 (IGTM…ADGM), 44–64 (LRVL…GCII), 97–117 (LFVV…PLVV), 143–163 (FLGV…TGEV), 168–188 (WWLF…YAMV), 211–231 (EIIG…GWSG), 235–255 (LLYG…QRLI), and 270–290 (NNWA…FAAL).

The protein belongs to the UbiA prenyltransferase family. The cofactor is Mg(2+).

The protein resides in the cell inner membrane. It carries out the reaction all-trans-octaprenyl diphosphate + 4-hydroxybenzoate = 4-hydroxy-3-(all-trans-octaprenyl)benzoate + diphosphate. The protein operates within cofactor biosynthesis; ubiquinone biosynthesis. Functionally, catalyzes the prenylation of para-hydroxybenzoate (PHB) with an all-trans polyprenyl group. Mediates the second step in the final reaction sequence of ubiquinone-8 (UQ-8) biosynthesis, which is the condensation of the polyisoprenoid side chain with PHB, generating the first membrane-bound Q intermediate 3-octaprenyl-4-hydroxybenzoate. This chain is 4-hydroxybenzoate octaprenyltransferase, found in Shewanella amazonensis (strain ATCC BAA-1098 / SB2B).